Reading from the N-terminus, the 275-residue chain is Cell division protein FtsQ (275 aa).

The segment at 1–20 (MRDLHKKKPRPVTQNRLKKP) is disordered. At 1–38 (MRDLHKKKPRPVTQNRLKKPPKTCKPINYRGILKKTAK) the chain is on the cytoplasmic side. Residues 39–61 (VVGGAALISAVGCAGYGIYRIIA) traverse the membrane as a helical segment. The Periplasmic portion of the chain corresponds to 62–275 (GTTFFKLERI…YSDKIIVKKV (214 aa)). A POTRA domain is found at 66–134 (FKLERIEVSE…NTLSMQIAER (69 aa)).

The protein belongs to the FtsQ/DivIB family. FtsQ subfamily.

It localises to the cell inner membrane. In terms of biological role, essential cell division protein. This is Cell division protein FtsQ from Geotalea daltonii (strain DSM 22248 / JCM 15807 / FRC-32) (Geobacter daltonii).